The chain runs to 216 residues: Uracil-DNA glycosylase (216 aa).

The active-site Proton acceptor is aspartate 59.

Belongs to the uracil-DNA glycosylase (UDG) superfamily. UNG family.

Its subcellular location is the cytoplasm. The catalysed reaction is Hydrolyzes single-stranded DNA or mismatched double-stranded DNA and polynucleotides, releasing free uracil.. Excises uracil residues from the DNA which can arise as a result of misincorporation of dUMP residues by DNA polymerase or due to deamination of cytosine. The chain is Uracil-DNA glycosylase from Idiomarina loihiensis (strain ATCC BAA-735 / DSM 15497 / L2-TR).